A 41-amino-acid polypeptide reads, in one-letter code: Photosystem II reaction center protein X (41 aa).

Topologically, residues 2–6 (TITPS) are lumenal. Residues 7 to 29 (LKGFFIGLLSGAVVLGLTFAVLI) traverse the membrane as a helical segment. Residues 30–41 (AISQIDKVQRSL) lie on the Cytoplasmic side of the membrane.

The protein belongs to the PsbX family. Type 1 subfamily. As to quaternary structure, PSII is composed of 1 copy each of membrane proteins PsbA, PsbB, PsbC, PsbD, PsbE, PsbF, PsbH, PsbI, PsbJ, PsbK, PsbL, PsbM, PsbT, PsbX, PsbY, PsbZ, Psb30/Ycf12, peripheral proteins PsbO, CyanoQ (PsbQ), PsbU, PsbV and a large number of cofactors. It forms dimeric complexes. Part of a photosystem II (PSII) assembly intermediate complex PSII-I; crystallized from a strain deleted of psbJ, it forms monomeric PSII before addition of the oxygen evolving complex. PSII-I includes 3 assembly factors not found in mature PSII (Psb27, Psb28 and Psb34). It depends on PSII binds multiple chlorophylls, carotenoids and specific lipids. as a cofactor.

It localises to the cellular thylakoid membrane. Involved in the binding and/or turnover of quinones at the Q(B) site of photosystem II (PSII). PSII is a light-driven water plastoquinone oxidoreductase, using light energy to abstract electrons from H(2)O, generating a proton gradient subsequently used for ATP formation. This Thermosynechococcus vestitus (strain NIES-2133 / IAM M-273 / BP-1) protein is Photosystem II reaction center protein X.